The sequence spans 162 residues: 2-C-methyl-D-erythritol 2,4-cyclodiphosphate synthase (162 aa).

2 residues coordinate a divalent metal cation: aspartate 12 and histidine 14. Residues 12–14 and 38–39 each bind 4-CDP-2-C-methyl-D-erythritol 2-phosphate; these read DVH and HS. Residue histidine 46 coordinates a divalent metal cation. Residues 60-62, 136-139, phenylalanine 143, and arginine 146 each bind 4-CDP-2-C-methyl-D-erythritol 2-phosphate; these read DIG and TTTE.

It belongs to the IspF family. In terms of assembly, homotrimer. A divalent metal cation serves as cofactor.

It catalyses the reaction 4-CDP-2-C-methyl-D-erythritol 2-phosphate = 2-C-methyl-D-erythritol 2,4-cyclic diphosphate + CMP. It functions in the pathway isoprenoid biosynthesis; isopentenyl diphosphate biosynthesis via DXP pathway; isopentenyl diphosphate from 1-deoxy-D-xylulose 5-phosphate: step 4/6. Functionally, involved in the biosynthesis of isopentenyl diphosphate (IPP) and dimethylallyl diphosphate (DMAPP), two major building blocks of isoprenoid compounds. Catalyzes the conversion of 4-diphosphocytidyl-2-C-methyl-D-erythritol 2-phosphate (CDP-ME2P) to 2-C-methyl-D-erythritol 2,4-cyclodiphosphate (ME-CPP) with a corresponding release of cytidine 5-monophosphate (CMP). The chain is 2-C-methyl-D-erythritol 2,4-cyclodiphosphate synthase from Porphyromonas gingivalis (strain ATCC 33277 / DSM 20709 / CIP 103683 / JCM 12257 / NCTC 11834 / 2561).